Consider the following 523-residue polypeptide: 26S proteasome regulatory subunit RPN3 (523 aa).

Ala2 is modified (N-acetylalanine). Residues 270 to 450 (ARYFFYLSKI…GFIETTELLN (181 aa)) enclose the PCI domain. Ser454 carries the post-translational modification Phosphoserine. Over residues 480-495 (RYPEDKKTQQNEKSEN) the composition is skewed to basic and acidic residues. The disordered stretch occupies residues 480–523 (RYPEDKKTQQNEKSENGENDDDTLDGDLMDDMSDISDLDDLGFL). A compositionally biased stretch (acidic residues) spans 496–523 (GENDDDTLDGDLMDDMSDISDLDDLGFL).

It belongs to the proteasome subunit S3 family. The 26S proteasome is composed of a core protease, known as the 20S proteasome, capped at one or both ends by the 19S regulatory complex (RC). The RC is composed of at least 18 different subunits in two subcomplexes, the base and the lid, which form the portions proximal and distal to the 20S proteolytic core, respectively. In terms of processing, N-acetylated by NAT1.

Acts as a regulatory subunit of the 26S proteasome which is involved in the ATP-dependent degradation of ubiquitinated proteins. This Saccharomyces cerevisiae (strain ATCC 204508 / S288c) (Baker's yeast) protein is 26S proteasome regulatory subunit RPN3 (RPN3).